Here is a 143-residue protein sequence, read N- to C-terminus: Large ribosomal subunit protein uL11 (143 aa).

This sequence belongs to the universal ribosomal protein uL11 family. In terms of assembly, part of the ribosomal stalk of the 50S ribosomal subunit. Interacts with L10 and the large rRNA to form the base of the stalk. L10 forms an elongated spine to which L12 dimers bind in a sequential fashion forming a multimeric L10(L12)X complex. Post-translationally, one or more lysine residues are methylated.

In terms of biological role, forms part of the ribosomal stalk which helps the ribosome interact with GTP-bound translation factors. The protein is Large ribosomal subunit protein uL11 of Leptothrix cholodnii (strain ATCC 51168 / LMG 8142 / SP-6) (Leptothrix discophora (strain SP-6)).